Consider the following 273-residue polypeptide: Alcohol dehydrogenase-related 31 kDa protein (273 aa).

Residue 11 to 34 (YVADCGGIALETCKVLMTKNIAKL) coordinates NAD(+). Position 139 (Ser139) interacts with substrate. Tyr152 acts as the Proton acceptor in catalysis.

It belongs to the short-chain dehydrogenases/reductases (SDR) family.

This is Alcohol dehydrogenase-related 31 kDa protein (Adhr) from Drosophila immigrans (Fruit fly).